The following is a 222-amino-acid chain: UPF0316 protein Mboo_0791 (222 aa).

The next 3 helical transmembrane spans lie at 25–45, 67–87, and 93–113; these read FFLF…IFLA, LAPV…VGVL, and IAYF…GLVI.

This sequence belongs to the UPF0316 family.

It localises to the cell membrane. The protein is UPF0316 protein Mboo_0791 of Methanoregula boonei (strain DSM 21154 / JCM 14090 / 6A8).